The primary structure comprises 192 residues: Succinate dehydrogenase cytochrome b560 subunit, mitochondrial (192 aa).

A mitochondrion-targeting transit peptide spans 1–27 (MFGRTLNTFTSRNAPLVRNFDKFIVNN). Residues 48 to 83 (YSTQAKKPFTITEKRIDELKTPYQPTSPHLTIYKFP) lie on the Mitochondrial matrix side of the membrane. The chain crosses the membrane as a helical span at residues 84–113 (LPAVMSIMHRATGICLALGITGLAGVTLFA). Residues 114-131 (PHDAIHYIQLLHTQYPAL) lie on the Mitochondrial intermembrane side of the membrane. Residues 132 to 156 (VYPAKFAVALPLTYHFCTGVRHIIW) form a helical membrane-spanning segment. His146 is a binding site for heme b. Over 157-164 (DETVKGLS) the chain is Mitochondrial matrix. A helical transmembrane segment spans residues 165–186 (ISQIESSGKVLLAVVAVLSTIF). The Mitochondrial intermembrane segment spans residues 187–189 (TFV).

It belongs to the cytochrome b560 family. Component of complex II composed of four subunits: the flavoprotein (FP) sdha, iron-sulfur protein (IP) sdhb, and a cytochrome b560 composed of sdhc and sdhd. Heme b is required as a cofactor.

Its subcellular location is the mitochondrion inner membrane. The protein operates within carbohydrate metabolism; tricarboxylic acid cycle. Membrane-anchoring subunit of succinate dehydrogenase (SDH) that is involved in complex II of the mitochondrial electron transport chain and is responsible for transferring electrons from succinate to ubiquinone (coenzyme Q). The polypeptide is Succinate dehydrogenase cytochrome b560 subunit, mitochondrial (sdhC) (Dictyostelium discoideum (Social amoeba)).